The chain runs to 134 residues: Profilin-4 (134 aa).

Cysteine 13 and cysteine 118 are oxidised to a cystine. An Involved in PIP2 interaction motif is present at residues 84-100; the sequence is AVIRGKKGSGGITIKKT. Threonine 114 bears the Phosphothreonine mark.

This sequence belongs to the profilin family. As to quaternary structure, occurs in many kinds of cells as a complex with monomeric actin in a 1:1 ratio. Post-translationally, phosphorylated by MAP kinases.

It is found in the cytoplasm. The protein localises to the cytoskeleton. Functionally, binds to actin and affects the structure of the cytoskeleton. At high concentrations, profilin prevents the polymerization of actin, whereas it enhances it at low concentrations. This chain is Profilin-4, found in Olea europaea (Common olive).